The chain runs to 389 residues: 8-amino-7-oxononanoate synthase (389 aa).

Arg19 contributes to the substrate binding site. Pyridoxal 5'-phosphate is bound at residue 106–107 (GY). A substrate-binding site is contributed by His131. Pyridoxal 5'-phosphate contacts are provided by residues Ser178, 203 to 206 (DDAH), and 234 to 237 (TLSK). Position 237 is an N6-(pyridoxal phosphate)lysine (Lys237). Residue Thr351 participates in substrate binding.

The protein belongs to the class-II pyridoxal-phosphate-dependent aminotransferase family. BioF subfamily. Homodimer. The cofactor is pyridoxal 5'-phosphate.

It catalyses the reaction 6-carboxyhexanoyl-[ACP] + L-alanine + H(+) = (8S)-8-amino-7-oxononanoate + holo-[ACP] + CO2. It functions in the pathway cofactor biosynthesis; biotin biosynthesis. Its function is as follows. Catalyzes the decarboxylative condensation of pimeloyl-[acyl-carrier protein] and L-alanine to produce 8-amino-7-oxononanoate (AON), [acyl-carrier protein], and carbon dioxide. Can also use pimeloyl-CoA instead of pimeloyl-ACP as substrate. The protein is 8-amino-7-oxononanoate synthase (bioF) of Lysinibacillus sphaericus (Bacillus sphaericus).